Consider the following 260-residue polypeptide: Putative ABC transporter ATP-binding protein PH0132 (260 aa).

Residues 2–234 (IEFRDVWFWY…DLEGFGLKEP (233 aa)) form the ABC transporter domain. Position 34 to 41 (34 to 41 (GPNGSGKT)) interacts with ATP.

It belongs to the ABC transporter superfamily.

The protein resides in the cell membrane. Probably part of an ABC transporter complex. Responsible for energy coupling to the transport system. This Pyrococcus horikoshii (strain ATCC 700860 / DSM 12428 / JCM 9974 / NBRC 100139 / OT-3) protein is Putative ABC transporter ATP-binding protein PH0132.